We begin with the raw amino-acid sequence, 564 residues long: Efflux pump DEP3 (564 aa).

A compositionally biased stretch (polar residues) spans 1–12 (MVYSSTSSSQNR). Positions 1 to 48 (MVYSSTSSSQNRPDGEKHVEAVGSSTRIPSDELVDRGGGDTTTGKQSP) are disordered. Positions 29-38 (PSDELVDRGG) are enriched in basic and acidic residues. 14 consecutive transmembrane segments (helical) span residues 65–85 (STTL…PAII), 91–111 (LELL…ILLW), 122–142 (WVYI…GAAP), 152–172 (VIAG…VSVL), 185–205 (STVV…AFAA), 212–232 (WGFY…FLLF), 255–275 (AVIF…GGVV), 281–301 (GTVI…IVLL), 332–352 (FLSS…FQFI), 362–382 (VRLL…GFLM), 386–406 (GLIP…TALM), 423–443 (ILIG…VQSL), 452–472 (AVGA…AISG), and 528–548 (TIWA…FPLL).

This sequence belongs to the major facilitator superfamily. TCR/Tet family.

Its subcellular location is the cell membrane. In terms of biological role, efflux pump; part of the gene cluster that mediates the biosynthesis of depudecin, a highly oxidized eleven-carbon linear polyketide that acts as a histone deacetylase (HDAC) inhibitor and makes a small contribution to pathogenesis. Is presumed either to be responsible for exporting depudecin, to provide self-protection, or both. This is Efflux pump DEP3 from Alternaria brassicicola (Dark leaf spot agent).